Reading from the N-terminus, the 470-residue chain is Tryptophan synthase beta chain 1, chloroplastic (470 aa).

The segment covering 1–10 has biased composition (polar residues); sequence MAASGTSATF. A disordered region spans residues 1–24; the sequence is MAASGTSATFRASVSSAPSSSSQL. Low complexity predominate over residues 12–22; the sequence is ASVSSAPSSSS. Lys165 carries the post-translational modification N6-(pyridoxal phosphate)lysine.

This sequence belongs to the TrpB family. As to quaternary structure, tetramer of two alpha and two beta chains. It depends on pyridoxal 5'-phosphate as a cofactor.

It is found in the plastid. The protein resides in the chloroplast. It carries out the reaction (1S,2R)-1-C-(indol-3-yl)glycerol 3-phosphate + L-serine = D-glyceraldehyde 3-phosphate + L-tryptophan + H2O. It functions in the pathway amino-acid biosynthesis; L-tryptophan biosynthesis; L-tryptophan from chorismate: step 5/5. In terms of biological role, the beta subunit is responsible for the synthesis of L-tryptophan from indole and L-serine. The polypeptide is Tryptophan synthase beta chain 1, chloroplastic (TSB1) (Arabidopsis thaliana (Mouse-ear cress)).